The chain runs to 152 residues: Calcium-binding protein SPEC 1A (152 aa).

EF-hand domains follow at residues 10–45, 46–81, 84–119, and 120–152; these read EEVT…TGKS, YTDK…QMVK, WKEE…SKPP, and MKRK…IKSC. Asp-23, Asp-25, Ser-27, Ser-29, Glu-34, Asp-59, Asp-61, Ser-63, Thr-65, Glu-70, Asp-97, Asp-99, Asn-101, Ser-103, Glu-108, Asp-133, Asn-135, Asp-137, Lys-139, and Glu-144 together coordinate Ca(2+). Positions 95-121 are disordered; it reads DMDKDGNGSLSPQELREALSASKPPMK.

Found in cell lineages giving rise to the aboral ectoderm, a squamous epithelium covering the surface of the late stage embryo and larva.

In terms of biological role, calcium-binding protein involved in larval development and metamorphosis. Likely to function as calcium buffers mediating the transport of calcium from the sea water to the blastocoel where calcium is required for skeleton formation. This chain is Calcium-binding protein SPEC 1A (SPEC1), found in Strongylocentrotus purpuratus (Purple sea urchin).